The following is a 357-amino-acid chain: tRNA/tmRNA (uracil-C(5))-methyltransferase (357 aa).

S-adenosyl-L-methionine is bound by residues Gln180, Tyr209, Asn214, Glu230, and Asp290. Cys315 functions as the Nucleophile in the catalytic mechanism. The active-site Proton acceptor is the Glu349.

The protein belongs to the class I-like SAM-binding methyltransferase superfamily. RNA M5U methyltransferase family. TrmA subfamily.

The catalysed reaction is uridine(54) in tRNA + S-adenosyl-L-methionine = 5-methyluridine(54) in tRNA + S-adenosyl-L-homocysteine + H(+). The enzyme catalyses uridine(341) in tmRNA + S-adenosyl-L-methionine = 5-methyluridine(341) in tmRNA + S-adenosyl-L-homocysteine + H(+). In terms of biological role, dual-specificity methyltransferase that catalyzes the formation of 5-methyluridine at position 54 (m5U54) in all tRNAs, and that of position 341 (m5U341) in tmRNA (transfer-mRNA). This Campylobacter jejuni (strain RM1221) protein is tRNA/tmRNA (uracil-C(5))-methyltransferase.